Here is a 376-residue protein sequence, read N- to C-terminus: Cyclin-dependent kinase 9-B (376 aa).

In terms of domain architecture, Protein kinase spans 19–319; the sequence is YERLAKIGQG…SDEALNHDFF (301 aa). Residues 25-33 and Lys48 contribute to the ATP site; that span reads IGQGTFGEV. Asp153 functions as the Proton acceptor in the catalytic mechanism. The interval 345-376 is disordered; it reads PPRRRGGHMPQQPANQARNPAATNQSEFDRVF. Residues 354–369 show a composition bias toward low complexity; the sequence is PQQPANQARNPAATNQ.

It belongs to the protein kinase superfamily. CMGC Ser/Thr protein kinase family. CDC2/CDKX subfamily. Associates with cyclin-T to form P-TEFb.

The protein resides in the nucleus. It carries out the reaction L-seryl-[protein] + ATP = O-phospho-L-seryl-[protein] + ADP + H(+). The catalysed reaction is L-threonyl-[protein] + ATP = O-phospho-L-threonyl-[protein] + ADP + H(+). The enzyme catalyses [DNA-directed RNA polymerase] + ATP = phospho-[DNA-directed RNA polymerase] + ADP + H(+). Functionally, member of the cyclin-dependent kinase pair (CDK9/cyclin-T) complex, also called positive transcription elongation factor B (P-TEFb), which is proposed to facilitate the transition from abortive to production elongation by phosphorylating the CTD (C-terminal domain) of the large subunit of RNA polymerase II (RNAP II) and SUPT5H. The chain is Cyclin-dependent kinase 9-B (cdk9-b) from Xenopus laevis (African clawed frog).